A 244-amino-acid chain; its full sequence is uncharacterized protein (244 aa).

Transmembrane regions (helical) follow at residues 21–41 (FPYSVPMIAGFLFLGIAYGIY), 44–64 (ALGFGFLYPTLMALLIYAGSV), 66–86 (FIAAGALIAPFSPISVLLITL), 139–159 (WYMFFVSLYLHIYWVLGAAMG), 165–185 (VLPFNLKGVEFSMTALFLVIF), and 199–219 (LLGLGIALVFLLIIGKEYFLI).

Belongs to the AzlC family.

It is found in the cell membrane. This is an uncharacterized protein from Haemophilus influenzae (strain ATCC 51907 / DSM 11121 / KW20 / Rd).